A 134-amino-acid polypeptide reads, in one-letter code: Profilin-4 (134 aa).

A disulfide bridge links C13 with C118. An Involved in PIP2 interaction motif is present at residues 84-100; the sequence is AVIRGKKGSGGITIKKT. At T114 the chain carries Phosphothreonine.

Belongs to the profilin family. As to quaternary structure, occurs in many kinds of cells as a complex with monomeric actin in a 1:1 ratio. Post-translationally, phosphorylated by MAP kinases.

It is found in the cytoplasm. It localises to the cytoskeleton. Functionally, binds to actin and affects the structure of the cytoskeleton. At high concentrations, profilin prevents the polymerization of actin, whereas it enhances it at low concentrations. The sequence is that of Profilin-4 from Olea europaea (Common olive).